The sequence spans 239 residues: Ribonuclease PH (239 aa).

Residues arginine 87 and 125–127 (GTR) contribute to the phosphate site.

This sequence belongs to the RNase PH family. In terms of assembly, homohexameric ring arranged as a trimer of dimers.

It catalyses the reaction tRNA(n+1) + phosphate = tRNA(n) + a ribonucleoside 5'-diphosphate. Its function is as follows. Phosphorolytic 3'-5' exoribonuclease that plays an important role in tRNA 3'-end maturation. Removes nucleotide residues following the 3'-CCA terminus of tRNAs; can also add nucleotides to the ends of RNA molecules by using nucleoside diphosphates as substrates, but this may not be physiologically important. Probably plays a role in initiation of 16S rRNA degradation (leading to ribosome degradation) during starvation. This is Ribonuclease PH from Dehalococcoides mccartyi (strain ATCC BAA-2266 / KCTC 15142 / 195) (Dehalococcoides ethenogenes (strain 195)).